The sequence spans 250 residues: DNA repair protein RecO (250 aa).

The protein belongs to the RecO family.

Involved in DNA repair and RecF pathway recombination. The polypeptide is DNA repair protein RecO (Staphylococcus aureus (strain COL)).